A 319-amino-acid chain; its full sequence is Probable enoyl-CoA hydratase alpha subunit (319 aa).

Positions 199 to 298 are DUF35; the sequence is FEAAKQRRLV…EIGMPVVLDW (100 aa).

Belongs to the thioester dehydratase family. Heterodimer composed of ChsH1 and ChsH2. Two heterodimers combine to form a heterotetramer. The complex interacts with Ltp2 via the DUF35 C-terminal region of ChsH2.

Probably involved in bile acid degradation. The protein is Probable enoyl-CoA hydratase alpha subunit of Thermomonospora curvata (strain ATCC 19995 / DSM 43183 / JCM 3096 / KCTC 9072 / NBRC 15933 / NCIMB 10081 / Henssen B9).